Reading from the N-terminus, the 525-residue chain is MTTNIHQHRILILDFGSQYTQLIARRIREIGVYCELWAWDVTEEQIREFNPSGIILSGGPESTTAQGSPRAPEYVFNAGVPVLGVCYGMQTMSVQFGGKVEDSTEREFGYAQVEIKAESALFRGIQDSLNEQGKPSLDVWMSHGDKVTAIPEDFITIASTDTCPFAIIANEEKRFYGVQFHPEVTHTHQGQRILERFVLDVCQCEALWTPASIIEDTVVRLREQVGEDHVILGLSGGVDSSVTALLLHRAIGNRLTCVFVDNGLLRLNEATQVMEMFAGKFGLNIVHVPAEDRFLTALAGINDPEEKRKTIGRVFVEVFDEEASKQAQVKWLAQGTIYPDVIESAASATGKAHVIKSHHNVGGLPEEMKLGLVEPLKELFKDEVRKIGLELGLPYDMLNRHPFPGPGLGVRVLGEVKKEYCDLLRQADAIFIEELHKADLYNKVSQAFTVFLPVRSVGVMGDGRKYDWVVSLRAVETIDFMTAHWAHLPYDFLGRVSNRIINEVNGISRVVYDVSGKPPATIEWE.

The Glutamine amidotransferase type-1 domain maps to 9 to 207 (RILILDFGSQ…VLDVCQCEAL (199 aa)). The active-site Nucleophile is the Cys-86. Catalysis depends on residues His-181 and Glu-183. Positions 208 to 400 (WTPASIIEDT…LGLPYDMLNR (193 aa)) constitute a GMPS ATP-PPase domain. 235–241 (SGGVDSS) contributes to the ATP binding site.

In terms of assembly, homodimer.

It carries out the reaction XMP + L-glutamine + ATP + H2O = GMP + L-glutamate + AMP + diphosphate + 2 H(+). Its pathway is purine metabolism; GMP biosynthesis; GMP from XMP (L-Gln route): step 1/1. Its function is as follows. Catalyzes the synthesis of GMP from XMP. This is GMP synthase [glutamine-hydrolyzing] from Photorhabdus laumondii subsp. laumondii (strain DSM 15139 / CIP 105565 / TT01) (Photorhabdus luminescens subsp. laumondii).